The chain runs to 69 residues: Small ribosomal subunit protein uS7 (69 aa).

Belongs to the universal ribosomal protein uS7 family. In terms of assembly, part of the 30S ribosomal subunit.

Its function is as follows. One of the primary rRNA binding proteins, it binds directly to 16S rRNA where it nucleates assembly of the head domain of the 30S subunit. Is located at the subunit interface close to the decoding center. The sequence is that of Small ribosomal subunit protein uS7 (rps7) from Methanococcoides methylutens.